The chain runs to 278 residues: UPF0750 membrane protein YxkD (278 aa).

5 consecutive transmembrane segments (helical) span residues 8 to 28 (VLML…FAIP), 46 to 66 (LFQW…LLIG), 77 to 97 (YTII…GWSI), 101 to 121 (ELII…GMII), and 145 to 165 (ISYA…FIIG).

It belongs to the UPF0750 family.

Its subcellular location is the cell membrane. In Bacillus subtilis (strain 168), this protein is UPF0750 membrane protein YxkD (yxkD).